Consider the following 296-residue polypeptide: Phosphatidylglycerol--prolipoprotein diacylglyceryl transferase (296 aa).

Transmembrane regions (helical) follow at residues Leu-17–Gly-37, Met-59–Tyr-79, and Gly-97–Trp-117. Residue Arg-142 coordinates a 1,2-diacyl-sn-glycero-3-phospho-(1'-sn-glycerol). Transmembrane regions (helical) follow at residues Met-230–Phe-250 and Leu-265–Trp-285.

The protein belongs to the Lgt family.

Its subcellular location is the cell inner membrane. It carries out the reaction L-cysteinyl-[prolipoprotein] + a 1,2-diacyl-sn-glycero-3-phospho-(1'-sn-glycerol) = an S-1,2-diacyl-sn-glyceryl-L-cysteinyl-[prolipoprotein] + sn-glycerol 1-phosphate + H(+). The protein operates within protein modification; lipoprotein biosynthesis (diacylglyceryl transfer). Functionally, catalyzes the transfer of the diacylglyceryl group from phosphatidylglycerol to the sulfhydryl group of the N-terminal cysteine of a prolipoprotein, the first step in the formation of mature lipoproteins. The sequence is that of Phosphatidylglycerol--prolipoprotein diacylglyceryl transferase from Burkholderia pseudomallei (strain 668).